The following is a 278-amino-acid chain: uncharacterized protein (278 aa).

Residues 251–278 (TLSENKKQKSSSTSPETDSDMSEFFGDN) form a disordered region.

This is an uncharacterized protein from Aedes pseudoscutellaris reovirus (isolate France) (ApRV).